Here is a 1829-residue protein sequence, read N- to C-terminus: Protein TIC 214 (1829 aa).

6 helical membrane-spanning segments follow: residues I18–G38, F67–L87, P90–P110, L127–L147, F174–W194, and I224–I244. The segment covering R260 to G272 has biased composition (basic and acidic residues). Positions R260–E301 are disordered.

It belongs to the TIC214 family. As to quaternary structure, part of the Tic complex.

Its subcellular location is the plastid. The protein resides in the chloroplast inner membrane. Functionally, involved in protein precursor import into chloroplasts. May be part of an intermediate translocation complex acting as a protein-conducting channel at the inner envelope. This Citrus sinensis (Sweet orange) protein is Protein TIC 214.